We begin with the raw amino-acid sequence, 692 residues long: Proprotein convertase subtilisin/kexin type 9 (692 aa).

The signal sequence occupies residues 1–30; sequence MGTVSSRRSWWPLPLPLLLLLLLGPAGARA. Residues 31–152 constitute a propeptide that is removed on maturation; sequence QEDEDGDYEE…IEEDSSVFAQ (122 aa). Tyr-38 is modified (sulfotyrosine). Phosphoserine is present on Ser-47. An Inhibitor I9 domain is found at 77 to 149; it reads TYVVVLKEET…VDYIEEDSSV (73 aa). The region spanning 155 to 444 is the Peptidase S8 domain; it reads PWNLERITPA…VLTPNLVAAL (290 aa). Active-site charge relay system residues include Asp-186 and His-226. 2 disulfides stabilise this stretch: Cys-223–Cys-255 and Cys-323–Cys-358. Ser-386 functions as the Charge relay system in the catalytic mechanism. The tract at residues 450–692 is C-terminal domain; the sequence is RAGWQLFCRT…HLVQASQELQ (243 aa). 3 disulfides stabilise this stretch: Cys-457–Cys-527, Cys-477–Cys-526, and Cys-486–Cys-509. Asn-533 is a glycosylation site (N-linked (GlcNAc...) asparagine). 6 disulfides stabilise this stretch: Cys-534-Cys-601, Cys-552-Cys-600, Cys-562-Cys-588, Cys-608-Cys-679, Cys-626-Cys-678, and Cys-635-Cys-654. At Ser-688 the chain carries Phosphoserine.

This sequence belongs to the peptidase S8 family. In terms of assembly, monomer. Can self-associate to form dimers and higher multimers which may have increased LDLR degrading activity. The precursor protein but not the mature protein may form multimers. Interacts with APOB, VLDLR, LRP8/APOER2 and BACE1. The full-length immature form (pro-PCSK9) interacts with SCNN1A, SCNN1B and SCNN1G. The pro-PCSK9 form (via C-terminal domain) interacts with LDLR. Interacts (via the C-terminal domain) with ANXA2 (via repeat Annexin 1); the interaction inhibits the degradation of LDLR. Ca(2+) serves as cofactor. Cleavage by furin and PCSK5 generates a truncated inactive protein that is unable to induce LDLR degradation. Post-translationally, undergoes autocatalytic cleavage in the endoplasmic reticulum to release the propeptide from the N-terminus and the cleavage of the propeptide is strictly required for its maturation and activation. The cleaved propeptide however remains associated with the catalytic domain through non-covalent interactions, preventing potential substrates from accessing its active site. As a result, it is secreted from cells as a propeptide-containing, enzymatically inactive protein. In terms of processing, phosphorylation protects the propeptide against proteolysis.

It localises to the cytoplasm. Its subcellular location is the secreted. The protein localises to the endosome. It is found in the lysosome. The protein resides in the cell surface. It localises to the endoplasmic reticulum. Its subcellular location is the golgi apparatus. Its proteolytic activity is autoinhibited by the non-covalent binding of the propeptide to the catalytic domain. Inhibited by EGTA. In terms of biological role, crucial player in the regulation of plasma cholesterol homeostasis. Binds to low-density lipid receptor family members: low density lipoprotein receptor (LDLR), very low density lipoprotein receptor (VLDLR), apolipoprotein E receptor (LRP1/APOER) and apolipoprotein receptor 2 (LRP8/APOER2), and promotes their degradation in intracellular acidic compartments. Acts via a non-proteolytic mechanism to enhance the degradation of the hepatic LDLR through a clathrin LDLRAP1/ARH-mediated pathway. May prevent the recycling of LDLR from endosomes to the cell surface or direct it to lysosomes for degradation. Can induce ubiquitination of LDLR leading to its subsequent degradation. Inhibits intracellular degradation of APOB via the autophagosome/lysosome pathway in a LDLR-independent manner. Involved in the disposal of non-acetylated intermediates of BACE1 in the early secretory pathway. Inhibits epithelial Na(+) channel (ENaC)-mediated Na(+) absorption by reducing ENaC surface expression primarily by increasing its proteasomal degradation. Regulates neuronal apoptosis via modulation of LRP8/APOER2 levels and related anti-apoptotic signaling pathways. The polypeptide is Proprotein convertase subtilisin/kexin type 9 (PCSK9) (Macaca nemestrina (Pig-tailed macaque)).